Here is a 119-residue protein sequence, read N- to C-terminus: Protein TusC (119 aa).

This sequence belongs to the DsrF/TusC family. Heterohexamer, formed by a dimer of trimers. The hexameric TusBCD complex contains 2 copies each of TusB, TusC and TusD. The TusBCD complex interacts with TusE.

The protein resides in the cytoplasm. Functionally, part of a sulfur-relay system required for 2-thiolation of 5-methylaminomethyl-2-thiouridine (mnm(5)s(2)U) at tRNA wobble positions. The sequence is that of Protein TusC from Escherichia coli O8 (strain IAI1).